A 178-amino-acid chain; its full sequence is MPAYHSTFPVDPNTDRMVGNFALLPLNTKFRGPAYPSNSDYDIIDECLDLFRANSFFKNFEIKSPADRVLIYGILFINDCLAHLKITTSFNEAVKVLTNVALDNFTLPGTPGFPLNNVYQVPVQDHNSMDLLKTYIQQFRQELAMRLLERVYSSTDSKEYPSKFWLAFTRRRFMNKSL.

Lys29 is covalently cross-linked (Glycyl lysine isopeptide (Lys-Gly) (interchain with G-Cter in ubiquitin)).

This sequence belongs to the ARPC3 family. As to quaternary structure, component of the Arp2/3 complex composed of ARP2, ARP3, ARC40/p41-ARC, ARC35/p34-ARC, ARC18/p21-ARC, ARC19/p20-ARC and ARC16/p16-ARC.

Its subcellular location is the cytoplasm. It is found in the cytoskeleton. In terms of biological role, functions as a component of the Arp2/3 complex which is involved in regulation of actin polymerization and together with an activating nucleation-promoting factor (NPF) mediates the formation of branched actin networks. The sequence is that of Actin-related protein 2/3 complex subunit 3 (ARC18) from Saccharomyces cerevisiae (strain ATCC 204508 / S288c) (Baker's yeast).